Consider the following 201-residue polypeptide: Probable molybdenum cofactor guanylyltransferase (201 aa).

GTP is bound by residues 16–18 (LAG), Lys28, Asp75, and Asp107. Asp107 contacts Mg(2+).

The protein belongs to the MobA family. Requires Mg(2+) as cofactor.

It is found in the cytoplasm. It catalyses the reaction Mo-molybdopterin + GTP + H(+) = Mo-molybdopterin guanine dinucleotide + diphosphate. Transfers a GMP moiety from GTP to Mo-molybdopterin (Mo-MPT) cofactor (Moco or molybdenum cofactor) to form Mo-molybdopterin guanine dinucleotide (Mo-MGD) cofactor. In Mycobacterium bovis (strain ATCC BAA-935 / AF2122/97), this protein is Probable molybdenum cofactor guanylyltransferase.